The sequence spans 1016 residues: Vacuolar membrane protease (1016 aa).

The tract at residues 1–36 is disordered; the sequence is MAETESGTGNSPSHRLSETSNASGNRSHQQSKQIAS. Over 1–57 the chain is Cytoplasmic; sequence MAETESGTGNSPSHRLSETSNASGNRSHQQSKQIASYKSSKPNVFIRFIRAIFGYRK. The helical transmembrane segment at 58 to 78 threads the bilayer; the sequence is TSVTLFVFITIIATLILVELS. Residues 79–408 lie on the Vacuolar side of the membrane; sequence NSLDFSVKLP…FVIPASQLVL (330 aa). N-linked (GlcNAc...) asparagine glycans are attached at residues asparagine 147 and asparagine 177. The Zn(2+) site is built by histidine 191 and aspartate 203. The active-site Proton acceptor is the glutamate 238. Glutamate 239, glutamate 264, and histidine 337 together coordinate Zn(2+). The helical transmembrane segment at 409–429 threads the bilayer; sequence INVTCLAVIPLISLPLLVIIF. The Cytoplasmic portion of the chain corresponds to 430–438; sequence NYKKNWHIG. The helical transmembrane segment at 439–459 threads the bilayer; that stretch reads FINAIKFPVSLVLSICILNII. The Vacuolar portion of the chain corresponds to 460-481; the sequence is THNVIASINEFLPNSSYDSIVS. Residue asparagine 473 is glycosylated (N-linked (GlcNAc...) asparagine). A helical membrane pass occupies residues 482–502; the sequence is TLYSLFLLLNYLFLNGINFIF. Residues 503–511 lie on the Cytoplasmic side of the membrane; sequence KGYKGLYHD. A helical membrane pass occupies residues 512-532; that stretch reads EKLILIIQTSFIYWVLLIVST. The Vacuolar portion of the chain corresponds to 533–547; the sequence is NKLSKNKIGNDHTGE. The chain crosses the membrane as a helical span at residues 548–568; it reads FPLIMLFLLQSIGALFGLFSW. The Cytoplasmic portion of the chain corresponds to 569–646; sequence SFKKTTPDEL…SFSYDWSIQY (78 aa). The disordered stretch occupies residues 598–622; that stretch reads YGSNEAELESGEPISSNSSVSLNSS. Over residues 612–622 the composition is skewed to low complexity; it reads SSNSSVSLNSS. The helical transmembrane segment at 647-667 threads the bilayer; it reads VVIVPLSSLIVYNTGSLLLSG. Residues 668-681 are Vacuolar-facing; sequence LNKSIQESLNAEKL. N-linked (GlcNAc...) asparagine glycosylation occurs at asparagine 669. The chain crosses the membrane as a helical span at residues 682–702; that stretch reads IFDLIQLVAVTLAIPFLPFIF. Over 703 to 706 the chain is Cytoplasmic; sequence KINR. The helical transmembrane segment at 707–727 threads the bilayer; it reads LLVTALVLVFCSGFISIFLKS. At 728-1016 the chain is on the vacuolar side; the sequence is PFDQLNPLKL…LVSVSKYVEI (289 aa). Residues asparagine 778, asparagine 821, asparagine 850, asparagine 875, and asparagine 977 are each glycosylated (N-linked (GlcNAc...) asparagine).

Belongs to the peptidase M28 family. Zn(2+) serves as cofactor.

It is found in the vacuole membrane. Its function is as follows. May be involved in vacuolar sorting and osmoregulation. The polypeptide is Vacuolar membrane protease (Debaryomyces hansenii (strain ATCC 36239 / CBS 767 / BCRC 21394 / JCM 1990 / NBRC 0083 / IGC 2968) (Yeast)).